A 200-amino-acid chain; its full sequence is Ras-related protein Rab5 (200 aa).

Residues 17-25 (GDMGAGKSS), 36-42 (LEFQEST), 65-69 (DTAGQ), 123-126 (NKAD), and 153-155 (SAK) contribute to the GTP site. Residues 39–47 (QESTIGAAF) carry the Effector region motif. 2 S-geranylgeranyl cysteine lipidation sites follow: C198 and C199.

Belongs to the small GTPase superfamily. Rab family. As to expression, virtually not expressed in leaves, higher in stems and roots, and highest in flowers.

The protein localises to the cell membrane. Its function is as follows. Protein transport. Probably involved in vesicular traffic. This chain is Ras-related protein Rab5 (RAB5), found in Nicotiana tabacum (Common tobacco).